A 276-amino-acid chain; its full sequence is Dermonecrotic toxin LlSicTox-alphaIV2i (276 aa).

Histidine 5 is an active-site residue. The Mg(2+) site is built by glutamate 25 and aspartate 27. Histidine 41 functions as the Nucleophile in the catalytic mechanism. 2 disulfide bridges follow: cysteine 45-cysteine 51 and cysteine 47-cysteine 193. Aspartate 85 contributes to the Mg(2+) binding site.

It belongs to the arthropod phospholipase D family. Class II subfamily. Mg(2+) serves as cofactor. Expressed by the venom gland.

The protein localises to the secreted. It carries out the reaction an N-(acyl)-sphingosylphosphocholine = an N-(acyl)-sphingosyl-1,3-cyclic phosphate + choline. The catalysed reaction is an N-(acyl)-sphingosylphosphoethanolamine = an N-(acyl)-sphingosyl-1,3-cyclic phosphate + ethanolamine. The enzyme catalyses a 1-acyl-sn-glycero-3-phosphocholine = a 1-acyl-sn-glycero-2,3-cyclic phosphate + choline. It catalyses the reaction a 1-acyl-sn-glycero-3-phosphoethanolamine = a 1-acyl-sn-glycero-2,3-cyclic phosphate + ethanolamine. Functionally, dermonecrotic toxins cleave the phosphodiester linkage between the phosphate and headgroup of certain phospholipids (sphingolipid and lysolipid substrates), forming an alcohol (often choline) and a cyclic phosphate. This toxin acts on sphingomyelin (SM). It may also act on ceramide phosphoethanolamine (CPE), lysophosphatidylcholine (LPC) and lysophosphatidylethanolamine (LPE), but not on lysophosphatidylserine (LPS), and lysophosphatidylglycerol (LPG). It acts by transphosphatidylation, releasing exclusively cyclic phosphate products as second products. Induces dermonecrosis, hemolysis, increased vascular permeability, edema, inflammatory response, and platelet aggregation. The polypeptide is Dermonecrotic toxin LlSicTox-alphaIV2i (Loxosceles laeta (South American recluse spider)).